The chain runs to 263 residues: 3-methyl-2-oxobutanoate hydroxymethyltransferase 2 (263 aa).

Positions 45 and 84 each coordinate Mg(2+). Residues 45–46 (DS), D84, and K112 each bind 3-methyl-2-oxobutanoate. A Mg(2+)-binding site is contributed by E114. Catalysis depends on E181, which acts as the Proton acceptor.

Belongs to the PanB family. Homodecamer; pentamer of dimers. It depends on Mg(2+) as a cofactor.

It localises to the cytoplasm. It catalyses the reaction 3-methyl-2-oxobutanoate + (6R)-5,10-methylene-5,6,7,8-tetrahydrofolate + H2O = 2-dehydropantoate + (6S)-5,6,7,8-tetrahydrofolate. It participates in cofactor biosynthesis; (R)-pantothenate biosynthesis; (R)-pantoate from 3-methyl-2-oxobutanoate: step 1/2. Catalyzes the reversible reaction in which hydroxymethyl group from 5,10-methylenetetrahydrofolate is transferred onto alpha-ketoisovalerate to form ketopantoate. This Aliivibrio fischeri (strain ATCC 700601 / ES114) (Vibrio fischeri) protein is 3-methyl-2-oxobutanoate hydroxymethyltransferase 2.